The primary structure comprises 1092 residues: MTNTKYYPEVSSNADFAGLEREILKFWQDNNIFQKSIDDRNGESEFIFYDGPPFANGLPHYGHLLTGFIKDVYARYQTIKGKKVERRFGWDCHGLPAEMQSEKELGISGRLAIANFGIEKFNAHCRASVMKYANDWEEYVTRQARWVDFKNSYKTMDKNFMESVLWAFKELYNKGLLYESMRVMPYSWACETPLSNFETRLDNSYRERADKAVTVSFVLSHPVTTTTGSFKEYRILAWTTTPWTLPSNLALAVGSDIDYALVPKNDVCYIIAAYSVSKYAKELGLSGEENFEIIKGSALQGLNYKSLFDYFENHPNSFKIFAGDFVVEGDGTGVVHMAPGFGEDDQILCESKGIELVCPVDNSGKFTKEIPDLEGLQVFDANDKIIIKLKEQGNWLKTEQYIHNYPHCWRTDTPLIYKAVPSWYVKVTQFKDRMVELNQQINWIPFHVKDNLFGKWLENARDWSISRNRFWGTPLPVWKSDDPKYPRIDVYGSIEELEKDFGVKVTDLHRPFIDELTRPNPDDPTGKSTMRRIEDVFDCWFESGSMPYGQAHYPFENKEWFEDHFPADFIVEYSAQTRGWFYTLMVLSTALFDRPPFLNCICHGVILDSTGQKLSKRLNNYADPLELFDKYGSDALRVTMLSSNVVKGQELLIDKDGKMVFDTLRLFIKPIWNAYHFFTMYANADSLKGKLNFSSKNVLDVYILSKLKIAVQKIEESLDNFDTQTAYHAVSAFFEVLNNWYIRRSRARFWKSAKDTDKQNAYNTLYSCLDTMAIAMSALVPMISEAIYKGLRHCEERNDTALSGKSNIIARKDTSLDKAISGVSHKIATALSVPRNDAISVHLCNYPTLSDFEINHELVATMDNVLDICSNSLFIRSTENIRVRQPLASIAIISKHNNNLKDFEDLIKDEINVKAVIYRDDLENYASKKLSINFPMLGKRLPHKMKEIIAASKKGEWEAITGGLAICGETLNSDEYKLVLEPYSHIKGAASFENNSSLLILDLELTPELIEEGYARDIVRFIQQARKDADFSITDRILIEIISEFNLSKIIDNYGDFIKEQTLGEFAKNFTPDYVSKVALENHQIQLKVKKS.

The 'HIGH' region signature appears at 53–63 (PFANGLPHYGH). Residues 613–617 (KLSKR) carry the 'KMSKS' region motif. ATP is bound at residue lysine 616.

Belongs to the class-I aminoacyl-tRNA synthetase family. IleS type 2 subfamily. In terms of assembly, monomer. Zn(2+) serves as cofactor.

It is found in the cytoplasm. It catalyses the reaction tRNA(Ile) + L-isoleucine + ATP = L-isoleucyl-tRNA(Ile) + AMP + diphosphate. In terms of biological role, catalyzes the attachment of isoleucine to tRNA(Ile). As IleRS can inadvertently accommodate and process structurally similar amino acids such as valine, to avoid such errors it has two additional distinct tRNA(Ile)-dependent editing activities. One activity is designated as 'pretransfer' editing and involves the hydrolysis of activated Val-AMP. The other activity is designated 'posttransfer' editing and involves deacylation of mischarged Val-tRNA(Ile). This Rickettsia conorii (strain ATCC VR-613 / Malish 7) protein is Isoleucine--tRNA ligase.